The following is a 314-amino-acid chain: Ecto-ADP-ribosyltransferase 4 (314 aa).

The first 46 residues, 1–46, serve as a signal peptide directing secretion; the sequence is MGPLINRCKKILLPTTVPPATMRIWLLGGLLPFLLLLSGLQRPTEG. 2 cysteine pairs are disulfide-bonded: Cys-69–Cys-280 and Cys-182–Cys-231. Residues 91-276 form the TR mART core domain; the sequence is KNYFRMWQKA…LQLRSTGNLS (186 aa). The N-linked (GlcNAc...) asparagine glycan is linked to Asn-114. Tyr-126 lines the NAD(+) pocket. Asn-178 is a glycosylation site (N-linked (GlcNAc...) asparagine). Position 206 (Gln-206) interacts with NAD(+). Asn-222 is a glycosylation site (N-linked (GlcNAc...) asparagine). Ser-240 is a binding site for NAD(+). 2 N-linked (GlcNAc...) asparagine glycosylation sites follow: Asn-257 and Asn-274. Ala-285 is lipidated: GPI-anchor amidated alanine. Residues 286-314 constitute a propeptide, removed in mature form; it reads SSKKCIPDPIAIASLSFLTSVIIFSKSRV.

Belongs to the Arg-specific ADP-ribosyltransferase family. In terms of tissue distribution, expressed in spleen and T-cells.

The protein resides in the cell membrane. It catalyses the reaction L-arginyl-[protein] + NAD(+) = N(omega)-(ADP-D-ribosyl)-L-arginyl-[protein] + nicotinamide + H(+). In Homo sapiens (Human), this protein is Ecto-ADP-ribosyltransferase 4 (ART4).